Here is a 504-residue protein sequence, read N- to C-terminus: Probable alpha-L-arabinofuranosidase C (504 aa).

N-linked (GlcNAc...) asparagine glycans are attached at residues N152, N181, N269, and N467.

Belongs to the glycosyl hydrolase 51 family.

It is found in the secreted. It carries out the reaction Hydrolysis of terminal non-reducing alpha-L-arabinofuranoside residues in alpha-L-arabinosides.. It participates in glycan metabolism; L-arabinan degradation. Alpha-L-arabinofuranosidase involved in the degradation of arabinoxylan, a major component of plant hemicellulose. Acts only on small linear 1,5-alpha-linked L-arabinofuranosyl oligosaccharides. The chain is Probable alpha-L-arabinofuranosidase C (abfC) from Aspergillus terreus (strain NIH 2624 / FGSC A1156).